A 298-amino-acid chain; its full sequence is MLYQQIARNKRKTILVMFGFFVLLALIGAAIGYLFARTVIGGMIIAAIIAVIYMSVIIGQSTDVVMRMNNATEVRSASDAPELWHIVEDMALVARVPMPKVYIIHDPSPNAFATGNDPEHAAVAATTGLMEKMNREELEGVMAHEMTHVRNYDIRLQTIALALASAIAMLVNFAGNFWWIGGRSSSDDRDNPSSIFAILGSILLIILAPLAATIAQMALSRNREYLADAGAVELTRNPQGMISALEKLKTAVPMKHVDPSSSALYISDPEKNAKHHPFSNLFDTHPPLDKRIERLRQM.

The next 2 helical transmembrane spans lie at 14–34 and 39–59; these read ILVM…IGYL and VIGG…VIIG. His-144 is a binding site for Zn(2+). Residue Glu-145 is part of the active site. Position 148 (His-148) interacts with Zn(2+). Transmembrane regions (helical) follow at residues 159 to 179 and 195 to 215; these read IALA…NFWW and IFAI…ATIA. A Zn(2+)-binding site is contributed by Glu-224.

The protein belongs to the peptidase M48B family. The cofactor is Zn(2+).

It localises to the cell membrane. The protein is Protease HtpX homolog of Limosilactobacillus reuteri (strain DSM 20016) (Lactobacillus reuteri).